Here is a 718-residue protein sequence, read N- to C-terminus: Telomeric repeat-binding factor 2 (718 aa).

Disordered stretches follow at residues 1-22 (MAAKRSRAAMEEQEKTSTRSDD) and 219-286 (NSER…GAPE). 2 stretches are compositionally biased toward basic and acidic residues: residues 8–22 (AAMEEQEKTSTRSDD) and 219–228 (NSERAEEPKR). The segment at 24 to 220 (EQAVNRWVLQ…LVTMMKSLNS (197 aa)) is TRFH dimerization. 15 consecutive repeat copies span residues 257–269 (GTLRRAETAGGVA), 270–282 (GAPSCPEMAKDPT), 283–295 (GAPEHVGTVKDAV), 296–308 (RAPCPAESTEDSQ), 309–321 (GTPRCAETARDVM), 322–334 (GAPSPSEMTKDLL), 335–347 (GAPKCTETARDVV), 348–360 (RAPSPAESTKDPV), 361–373 (GTPGHAETARDVA), 374–386 (RAPSPAETTKNLP), 387–399 (GAPECADTVKNTV), 400–412 (RAPSPAERRKDLV), 413–425 (RAPKRAETARDVV), 426–438 (RAPSPAERVKDTA), and 439–451 (GASEPMKSASYPT). Positions 257 to 451 (GTLRRAETAG…EPMKSASYPT (195 aa)) are 15 X 13 AA approximate tandem repeats. Disordered stretches follow at residues 342-455 (TARD…ASQP) and 524-641 (FNKL…WSDE). Residues 405–425 (AERRKDLVRAPKRAETARDVV) are compositionally biased toward basic and acidic residues. The segment covering 533-543 (PSPQQMSPSVS) has biased composition (polar residues). Positions 545 to 550 (RTKRRK) match the Nuclear localization signal motif. Low complexity predominate over residues 584 to 595 (SQCSKSSESPDS). The segment covering 615–630 (PVSTKRSSQQRWNSSY) has biased composition (polar residues). Positions 664–717 (KKQKWTVQESEWIKDGVRKYGEGRWKTISEKYPFQNRTSVQIKDRYRTMKKLGI) constitute an HTH myb-type domain. The segment at residues 688 to 713 (WKTISEKYPFQNRTSVQIKDRYRTMK) is a DNA-binding region (H-T-H motif).

Homodimer. Component of the shelterin complex (telosome). Interacts with TERF2IP/RAP1. In terms of tissue distribution, highly expressed in embryo.

It is found in the nucleus. The protein localises to the chromosome. It localises to the telomere. Its function is as follows. Binds the telomeric double-stranded 5'-TTAGGG-3' repeat and plays a central role in telomere maintenance and protection against end-to-end fusion of chromosomes. In addition to its telomeric DNA-binding role, required to recruit a number of factors and enzymes required for telomere protection, including the shelterin complex, TERF2IP/RAP1 and DCLRE1B/Apollo. Component of the shelterin complex (telosome) that is involved in the regulation of telomere length and protection. Shelterin associates with arrays of double-stranded 5'-TTAGGG-3' repeats added by telomerase and protects chromosome ends; without its protective activity, telomeres are no longer hidden from the DNA damage surveillance and chromosome ends are inappropriately processed by DNA repair pathways. Together with DCLRE1B/Apollo, plays a key role in telomeric loop (T loop) formation by generating 3' single-stranded overhang at the leading end telomeres: T loops have been proposed to protect chromosome ends from degradation and repair. Required both to recruit DCLRE1B/Apollo to telomeres and activate the exonuclease activity of DCLRE1B/Apollo. Together with DCLRE1B/Apollo, required to control the amount of DNA topoisomerase (TOP1, TOP2A and TOP2B) needed for telomere replication during fork passage and prevent aberrant telomere topology. Recruits TERF2IP/RAP1 to telomeres, thereby participating in to repressing homology-directed repair (HDR), which can affect telomere length. The sequence is that of Telomeric repeat-binding factor 2 (TERF2) from Gallus gallus (Chicken).